Here is a 1366-residue protein sequence, read N- to C-terminus: DNA-directed RNA polymerase subunit beta'' (1366 aa).

The Zn(2+) site is built by Cys-220, Cys-291, Cys-298, and Cys-301.

The protein belongs to the RNA polymerase beta' chain family. RpoC2 subfamily. In terms of assembly, in plastids the minimal PEP RNA polymerase catalytic core is composed of four subunits: alpha, beta, beta', and beta''. When a (nuclear-encoded) sigma factor is associated with the core the holoenzyme is formed, which can initiate transcription. Zn(2+) serves as cofactor.

It is found in the plastid. The protein localises to the chloroplast. The enzyme catalyses RNA(n) + a ribonucleoside 5'-triphosphate = RNA(n+1) + diphosphate. Its function is as follows. DNA-dependent RNA polymerase catalyzes the transcription of DNA into RNA using the four ribonucleoside triphosphates as substrates. The sequence is that of DNA-directed RNA polymerase subunit beta'' from Phaseolus vulgaris (Kidney bean).